Reading from the N-terminus, the 273-residue chain is L-cysteine S-thiosulfotransferase subunit SoxA (273 aa).

The signal sequence occupies residues 1 to 24; the sequence is MKKTVTAVALLCALSSTAIAPTFA. An intrachain disulfide couples Cys74 to Cys110. The 112-residue stretch at 162–273 folds into the Cytochrome c domain; the sequence is EMYELGKRMF…GVMLTPGIKR (112 aa). Heme is bound by residues Cys182 and His186. Residue Arg230 participates in substrate binding. Cys234 is a heme binding site. Residue Cys234 is the Cysteine persulfide intermediate of the active site.

Belongs to the SoxA family. In terms of assembly, heterodimer of SoxA and SoxX. Heme is required as a cofactor. Cysteine persulfide at Cys-234.

It localises to the periplasm. The enzyme catalyses L-cysteinyl-[SoxY protein] + thiosulfate + 2 Fe(III)-[cytochrome c] = S-sulfosulfanyl-L-cysteinyl-[SoxY protein] + 2 Fe(II)-[cytochrome c] + 2 H(+). The catalysed reaction is S-sulfanyl-L-cysteinyl-[SoxY protein] + thiosulfate + 2 Fe(III)-[cytochrome c] = S-(2-sulfodisulfanyl)-L-cysteinyl-[SoxY protein] + 2 Fe(II)-[cytochrome c] + 2 H(+). C-type monoheme cytochrome, which is part of the SoxAX cytochrome complex involved in sulfur oxidation. The SoxAX complex catalyzes the formation of a heterodisulfide bond between the conserved cysteine residue on a sulfur carrier SoxYZ complex subunit SoxY and thiosulfate or other inorganic sulfur substrates. This leads to the liberation of two electrons, which may be transferred from the SoxAX complex to another cytochrome c that then channels them into the respiratory electron transport chain. Some electrons may be used for reductive CO(2) fixation. This is L-cysteine S-thiosulfotransferase subunit SoxA from Hydrogenophilus thermoluteolus (Pseudomonas hydrogenothermophila).